The following is a 141-amino-acid chain: HTH-type transcriptional regulator MntR (141 aa).

Positions 1-63 (MPTPSMEDYI…YEKYRGLVLT (63 aa)) constitute an HTH dtxR-type domain. Mn(2+)-binding residues include D8, E11, H77, E99, E102, and H103.

Belongs to the DtxR/MntR family. In terms of assembly, homodimer.

Its subcellular location is the cytoplasm. With respect to regulation, DNA binding is strongly activated by Mn(2+). Central regulator of manganese homeostasis. This chain is HTH-type transcriptional regulator MntR, found in Geobacillus kaustophilus (strain HTA426).